We begin with the raw amino-acid sequence, 139 residues long: Transcription antitermination protein NusB (139 aa).

Belongs to the NusB family.

In terms of biological role, involved in transcription antitermination. Required for transcription of ribosomal RNA (rRNA) genes. Binds specifically to the boxA antiterminator sequence of the ribosomal RNA (rrn) operons. In Rubrobacter xylanophilus (strain DSM 9941 / JCM 11954 / NBRC 16129 / PRD-1), this protein is Transcription antitermination protein NusB.